Reading from the N-terminus, the 362-residue chain is Anthranilate phosphoribosyltransferase (362 aa).

5-phospho-alpha-D-ribose 1-diphosphate-binding positions include G96, 99 to 100 (GD), T104, 106 to 109 (NIST), 124 to 132 (KHGNRAASS), and G136. G96 is a binding site for anthranilate. S108 serves as a coordination point for Mg(2+). N127 contacts anthranilate. Position 182 (R182) interacts with anthranilate. Residues D240 and E241 each contribute to the Mg(2+) site.

The protein belongs to the anthranilate phosphoribosyltransferase family. As to quaternary structure, homodimer. Mg(2+) serves as cofactor.

The catalysed reaction is N-(5-phospho-beta-D-ribosyl)anthranilate + diphosphate = 5-phospho-alpha-D-ribose 1-diphosphate + anthranilate. The protein operates within amino-acid biosynthesis; L-tryptophan biosynthesis; L-tryptophan from chorismate: step 2/5. Catalyzes the transfer of the phosphoribosyl group of 5-phosphorylribose-1-pyrophosphate (PRPP) to anthranilate to yield N-(5'-phosphoribosyl)-anthranilate (PRA). This is Anthranilate phosphoribosyltransferase from Rhodococcus opacus (strain B4).